A 358-amino-acid chain; its full sequence is Heat-inducible transcription repressor HrcA (358 aa).

Belongs to the HrcA family.

Negative regulator of class I heat shock genes (grpE-dnaK-dnaJ and groELS operons). Prevents heat-shock induction of these operons. This is Heat-inducible transcription repressor HrcA from Caulobacter vibrioides (strain ATCC 19089 / CIP 103742 / CB 15) (Caulobacter crescentus).